The chain runs to 255 residues: 5'-nucleotidase SurE (255 aa).

Positions 16, 17, 47, and 100 each coordinate a divalent metal cation.

This sequence belongs to the SurE nucleotidase family. Requires a divalent metal cation as cofactor.

It localises to the cytoplasm. The enzyme catalyses a ribonucleoside 5'-phosphate + H2O = a ribonucleoside + phosphate. Its function is as follows. Nucleotidase that shows phosphatase activity on nucleoside 5'-monophosphates. This chain is 5'-nucleotidase SurE, found in Vibrio vulnificus (strain CMCP6).